The chain runs to 128 residues: Fluoride-specific ion channel FluC (128 aa).

A run of 4 helical transmembrane segments spans residues 5-25, 35-55, 67-87, and 96-116; these read IVAI…LSIG, LGTL…VVAF, LFVI…SVEV, and FGWA…LTGL. Positions 75 and 78 each coordinate Na(+).

Belongs to the fluoride channel Fluc/FEX (TC 1.A.43) family.

It is found in the cell inner membrane. The catalysed reaction is fluoride(in) = fluoride(out). With respect to regulation, na(+) is not transported, but it plays an essential structural role and its presence is essential for fluoride channel function. Fluoride-specific ion channel. Important for reducing fluoride concentration in the cell, thus reducing its toxicity. This chain is Fluoride-specific ion channel FluC, found in Burkholderia pseudomallei (strain 1106a).